Reading from the N-terminus, the 318-residue chain is Serpentine receptor class delta-25 (318 aa).

7 consecutive transmembrane segments (helical) span residues 5–25, 38–58, 88–108, 126–146, 176–196, 226–246, and 258–278; these read LLHSVLSLVGILSNAFMMYLA, VVITIKTGTDILASSMSFFVM, HMFMLCFLEYDLVWLITSYLF, IAFYVFIPSMVHMGVWISIYI, ITLLTQLFITACLAVVAYTFI, TFKLILPSFIFLGITVFVAMF, and IVSVCFMFSPVCSPYAYIIFV.

The protein belongs to the nematode receptor-like protein srd family.

It localises to the membrane. The chain is Serpentine receptor class delta-25 (srd-25) from Caenorhabditis elegans.